Consider the following 426-residue polypeptide: L-cysteine:1D-myo-inositol 2-amino-2-deoxy-alpha-D-glucopyranoside ligase (426 aa).

A Zn(2+)-binding site is contributed by Cys-45. L-cysteinyl-5'-AMP-binding positions include 45–48 (CGIT), Thr-60, and 83–85 (NVT). The short motif at 47 to 57 (ITPYDATHIGH) is the 'HIGH' region element. The 'ERGGDP' region motif lies at 199–204 (ERGGDP). Trp-239 lines the L-cysteinyl-5'-AMP pocket. Cys-243 serves as a coordination point for Zn(2+). 261-263 (GSD) contacts L-cysteinyl-5'-AMP. His-268 serves as a coordination point for Zn(2+). Val-294 is an L-cysteinyl-5'-AMP binding site. Positions 300-304 (KMSKS) match the 'KMSKS' region motif.

The protein belongs to the class-I aminoacyl-tRNA synthetase family. MshC subfamily. As to quaternary structure, monomer. Zn(2+) serves as cofactor.

The catalysed reaction is 1D-myo-inositol 2-amino-2-deoxy-alpha-D-glucopyranoside + L-cysteine + ATP = 1D-myo-inositol 2-(L-cysteinylamino)-2-deoxy-alpha-D-glucopyranoside + AMP + diphosphate + H(+). Its function is as follows. Catalyzes the ATP-dependent condensation of GlcN-Ins and L-cysteine to form L-Cys-GlcN-Ins. The polypeptide is L-cysteine:1D-myo-inositol 2-amino-2-deoxy-alpha-D-glucopyranoside ligase (Clavibacter michiganensis subsp. michiganensis (strain NCPPB 382)).